The following is a 153-amino-acid chain: Ribosome maturation factor RimP (153 aa).

This sequence belongs to the RimP family.

The protein resides in the cytoplasm. Its function is as follows. Required for maturation of 30S ribosomal subunits. This Synechococcus elongatus (strain ATCC 33912 / PCC 7942 / FACHB-805) (Anacystis nidulans R2) protein is Ribosome maturation factor RimP.